Consider the following 304-residue polypeptide: uncharacterized protein (304 aa).

Residues Thr-58 and Tyr-121 each act as charge relay system in the active site. Tyr-147 serves as the catalytic Proton donor. Lys-175 functions as the Schiff-base intermediate with substrate in the catalytic mechanism.

This sequence belongs to the DapA family. As to quaternary structure, homotetramer.

The protein resides in the cytoplasm. This is an uncharacterized protein from Halobacterium salinarum (strain ATCC 29341 / DSM 671 / R1).